A 510-amino-acid chain; its full sequence is MSILNIVPGRLTLAELRRVSRETGLQLQLDPSSHAAIDASAATVARVLSEGRTVYGINTGFGLLASTKIAPEELELLQRSIVLSHAAGIGAPMDDSTVRLVMALKINSLARGFSGIRRQVIEALVTLFNRQIYPVIPQKGSVGASGDLAPLSHMSAVLIGEGEAFVDGVRVPGSVAMRSAGLEPITLAPKEGLALLNGTQASTAFALEGLFAAEDLYVSATVAGSLSVEAALGSRTPFDARIHEVRGHQGQIDAARLYRDLLAHSQIEQSHENCGKVQDPYSLRCQPQVMGACLTQIRQAAEVLRVEANSVSDNPLVFAGDNDILSGGNFHAEPVAFAADNLALAIAEIGSLSERRMALLIDSNLSKLPPFLVNNGGVNSGFMIAQVTSAALASENKSLAHPASVDSLPTSANQEDHVSMATFAGRRLRDMAGNTAGILAVELLAACQGIDFRAPHQSSDKLEAAKGMLREQVPFYDKDRYFAPDIEKAAALVASGRFNSLVDGEVLPSL.

A cross-link (5-imidazolinone (Ala-Gly)) is located at residues 144–146 (ASG). Position 145 is a 2,3-didehydroalanine (Ser) (Ser-145).

This sequence belongs to the PAL/histidase family. Post-translationally, contains an active site 4-methylidene-imidazol-5-one (MIO), which is formed autocatalytically by cyclization and dehydration of residues Ala-Ser-Gly.

The protein resides in the cytoplasm. The enzyme catalyses L-histidine = trans-urocanate + NH4(+). It functions in the pathway amino-acid degradation; L-histidine degradation into L-glutamate; N-formimidoyl-L-glutamate from L-histidine: step 1/3. This Chromobacterium violaceum (strain ATCC 12472 / DSM 30191 / JCM 1249 / CCUG 213 / NBRC 12614 / NCIMB 9131 / NCTC 9757 / MK) protein is Histidine ammonia-lyase.